Reading from the N-terminus, the 1106-residue chain is GYF domain-containing protein gyf-1 (1106 aa).

The span at 1 to 17 shows a compositional bias: polar residues; sequence MSSVSSAEPTAQQNFNP. Disordered stretches follow at residues 1 to 50, 160 to 370, and 383 to 434; these read MSSV…GGFD, GALQ…DSTV, and KAST…SAWS. The segment covering 30-42 has biased composition (low complexity); sequence RGGSISSGNNRSS. Polar residues predominate over residues 162-180; the sequence is LQNGQSPTSRWAPKSSWNK. Positions 207–224 are enriched in gly residues; it reads GRGGGRIGGENGFGGATN. The span at 229–243 shows a compositional bias: polar residues; the sequence is AAQNEDSPGTYQSKF. Positions 248-261 are enriched in gly residues; sequence RGGGAGSVGRGGST. Residues 306–322 are compositionally biased toward polar residues; that stretch reads VGSTSRTSTNAAPQSSE. Composition is skewed to low complexity over residues 334–353 and 390–410; these read QRTQ…QQAQ and PPQQ…APSR. A GYF domain is found at 459–508; the sequence is PVQFYYMDPTETRRGPFPKDQMNVWFKAGYFTDESLRVQRGENGEYKTIG. Positions 584-746 form a coiled coil; that stretch reads LDDHNRRLAE…ERKRAAERER (163 aa). Disordered regions lie at residues 778–811, 909–928, 1026–1076, and 1087–1106; these read AFTG…KTAP, KNSQ…SAKV, AGGR…DGNI, and RLNK…PSRR. Residues 786–801 show a composition bias toward polar residues; it reads VSPSGSEESDEWISTS. Residues 1046–1057 are compositionally biased toward low complexity; that stretch reads SDSNSGSNSNSG.

This Caenorhabditis elegans protein is GYF domain-containing protein gyf-1.